Here is a 449-residue protein sequence, read N- to C-terminus: Malonyl-CoA:anthocyanidin 5-O-glucoside-6''-O-malonyltransferase (449 aa).

Met1 carries the N-acetylmethionine modification. Active-site proton acceptor residues include His162 and Asp394.

The protein belongs to the plant acyltransferase family. As to expression, expressed in flowers. Detected in leaves, stems, roots and siliques.

It carries out the reaction anthocyanin A3 + malonyl-CoA = anthocyanin A5 + CoA. It catalyses the reaction anthocyanin A7 + malonyl-CoA = anthocyanin A9 + CoA. The catalysed reaction is anthocyanin A6 + malonyl-CoA = anthocyanin A8 + CoA. The enzyme catalyses anthocyanin A10 + malonyl-CoA = anthocyanin A11 + CoA. Functionally, catalyzes the malonylation of the 5-O-glucose residue of anthocyanins, using malonyl-CoA as the malonyl donor. Acts only on anthocyanin substrates containing a 5-O-glucosyl moiety. Acts on the four native A.thaliana anthocyanins, A3, A7, and to a lesser extent, A6 and A10. Can also use the non-native anthocyanin compounds cyanin (cyanidin 3,5-diglucoside), malvin, pelargonidin 3,5-diglucoside, peonidin 3,5-diglucoside, cyanidin 3-coumaroylglucoside 5-glucoside, delphinidin 3-coumaroylrutinoside 5-glucoside and petunidin 3-coumaroylrutinoside 5-glucoside as substrates. Is the sole enzyme responsible for producing malonylated anthocyanin 5-O-glucosides in A.thaliana. Is not able to catalyze acyl transfer using acetyl-CoA, butyryl-CoA, hexanoyl-CoA, benzoyl-CoA, cinnamoyl-CoA, methylmalonyl-CoA, succinyl-CoA, p-coumaroyl-CoA or caffeoyl-CoA. The chain is Malonyl-CoA:anthocyanidin 5-O-glucoside-6''-O-malonyltransferase (5MAT) from Arabidopsis thaliana (Mouse-ear cress).